The primary structure comprises 154 residues: 6,7-dimethyl-8-ribityllumazine synthase (154 aa).

5-amino-6-(D-ribitylamino)uracil is bound by residues F23, 57–59 (AYE), and 81–83 (AVI). 86–87 (GT) provides a ligand contact to (2S)-2-hydroxy-3-oxobutyl phosphate. Catalysis depends on H89, which acts as the Proton donor. 5-amino-6-(D-ribitylamino)uracil is bound at residue F114. R128 is a (2S)-2-hydroxy-3-oxobutyl phosphate binding site.

It belongs to the DMRL synthase family. Forms an icosahedral capsid composed of 60 subunits, arranged as a dodecamer of pentamers.

It carries out the reaction (2S)-2-hydroxy-3-oxobutyl phosphate + 5-amino-6-(D-ribitylamino)uracil = 6,7-dimethyl-8-(1-D-ribityl)lumazine + phosphate + 2 H2O + H(+). The protein operates within cofactor biosynthesis; riboflavin biosynthesis; riboflavin from 2-hydroxy-3-oxobutyl phosphate and 5-amino-6-(D-ribitylamino)uracil: step 1/2. Catalyzes the formation of 6,7-dimethyl-8-ribityllumazine by condensation of 5-amino-6-(D-ribitylamino)uracil with 3,4-dihydroxy-2-butanone 4-phosphate. This is the penultimate step in the biosynthesis of riboflavin. This chain is 6,7-dimethyl-8-ribityllumazine synthase, found in Acidithiobacillus ferrooxidans (strain ATCC 23270 / DSM 14882 / CIP 104768 / NCIMB 8455) (Ferrobacillus ferrooxidans (strain ATCC 23270)).